The sequence spans 366 residues: 1-aminocyclopropane-1-carboxylate oxidase homolog 12 (366 aa).

One can recognise a Fe2OG dioxygenase domain in the interval 215–314 (KTLLMICHYY…RISVASFFSS (100 aa)). Positions 239, 241, and 295 each coordinate Fe cation. A 2-oxoglutarate-binding site is contributed by Arg-305.

Belongs to the iron/ascorbate-dependent oxidoreductase family. The cofactor is Fe(2+).

This chain is 1-aminocyclopropane-1-carboxylate oxidase homolog 12, found in Arabidopsis thaliana (Mouse-ear cress).